A 167-amino-acid polypeptide reads, in one-letter code: Fimbrial adapter PapF (167 aa).

An N-terminal signal peptide occupies residues methionine 1–leucine 18.

The protein localises to the secreted. It is found in the fimbrium. In terms of biological role, adapter that links the PapG adhesin to the distal end of the tip fibrillum. PapF is required for the correct presentation of the adhesin at the distal end of the tip fibrillum. Pili are polar filaments radiating from the surface of the bacterium to a length of 0.5-1.5 micrometers and numbering 100-300 per cell, and enable bacteria to colonize the epithelium of specific host organs. This is Fimbrial adapter PapF (papF) from Escherichia coli.